We begin with the raw amino-acid sequence, 869 residues long: DNA mismatch repair protein MutS (869 aa).

ATP is bound at residue 619–626 (GPNMAGKS).

The protein belongs to the DNA mismatch repair MutS family.

This protein is involved in the repair of mismatches in DNA. It is possible that it carries out the mismatch recognition step. This protein has a weak ATPase activity. The polypeptide is DNA mismatch repair protein MutS (Caldanaerobacter subterraneus subsp. tengcongensis (strain DSM 15242 / JCM 11007 / NBRC 100824 / MB4) (Thermoanaerobacter tengcongensis)).